Consider the following 737-residue polypeptide: O-GlcNAcase BT_4395 (737 aa).

An N-terminal signal peptide occupies residues Met-1 to Ala-21. A catalytic domain region spans residues Val-148–Pro-433. In terms of domain architecture, GH84 spans Arg-149–Ala-416. Residues Gly-156, Lys-187, and Asp-263 each contribute to the a protein site. The Proton donor role is filled by Asp-264. A protein contacts are provided by residues Tyr-303, Trp-358–Asn-360, Asp-365, and Asn-393.

Belongs to the glycosyl hydrolase 84 family. In terms of assembly, homodimer.

The enzyme catalyses 3-O-(N-acetyl-beta-D-glucosaminyl)-L-seryl-[protein] + H2O = N-acetyl-D-glucosamine + L-seryl-[protein]. The catalysed reaction is 3-O-(N-acetyl-beta-D-glucosaminyl)-L-threonyl-[protein] + H2O = L-threonyl-[protein] + N-acetyl-D-glucosamine. With respect to regulation, inhibited by 1,2-dideoxy-2'-methyl-alpha-D-glucopyranoso-[2,1-d]-delta 2'-thiazoline (NAG-thiazoline) and O-(2-acetamido-2-deoxy-D-glucopyranosylidene)amino-N-phenyl-carbamate (PUGNAc). Not inhibited by Streptozotocin. Can hydrolyze the glycosidic link of O-GlcNAcylated proteins. Can use p-nitrophenyl-beta-GlcNAc and 4-methylumbelliferone-GlcNAc as substrates (in vitro). This chain is O-GlcNAcase BT_4395, found in Bacteroides thetaiotaomicron (strain ATCC 29148 / DSM 2079 / JCM 5827 / CCUG 10774 / NCTC 10582 / VPI-5482 / E50).